The sequence spans 414 residues: GPI mannosyltransferase 1 (414 aa).

10 helical membrane passes run I6 to Y26, Y87 to I107, I119 to G139, I149 to L171, L183 to V203, F213 to G233, M282 to F302, F316 to F336, I356 to L376, and G387 to I407.

This sequence belongs to the PIGM family.

The protein resides in the endoplasmic reticulum membrane. The protein operates within glycolipid biosynthesis; glycosylphosphatidylinositol-anchor biosynthesis. Mannosyltransferase involved in glycosylphosphatidylinositol-anchor biosynthesis. Transfers the first alpha-1,4-mannose to GlcN-acyl-PI during GPI precursor assembly. Required for cell wall integrity. This chain is GPI mannosyltransferase 1 (GPI14), found in Debaryomyces hansenii (strain ATCC 36239 / CBS 767 / BCRC 21394 / JCM 1990 / NBRC 0083 / IGC 2968) (Yeast).